The sequence spans 303 residues: 1D-myo-inositol 2-acetamido-2-deoxy-alpha-D-glucopyranoside deacetylase 1 (303 aa).

His-15, Asp-18, and His-157 together coordinate Zn(2+).

It belongs to the MshB deacetylase family. The cofactor is Zn(2+).

It catalyses the reaction 1D-myo-inositol 2-acetamido-2-deoxy-alpha-D-glucopyranoside + H2O = 1D-myo-inositol 2-amino-2-deoxy-alpha-D-glucopyranoside + acetate. Catalyzes the deacetylation of 1D-myo-inositol 2-acetamido-2-deoxy-alpha-D-glucopyranoside (GlcNAc-Ins) in the mycothiol biosynthesis pathway. The chain is 1D-myo-inositol 2-acetamido-2-deoxy-alpha-D-glucopyranoside deacetylase 1 from Saccharopolyspora erythraea (strain ATCC 11635 / DSM 40517 / JCM 4748 / NBRC 13426 / NCIMB 8594 / NRRL 2338).